The primary structure comprises 309 residues: Malate dehydrogenase (309 aa).

NAD(+) contacts are provided by residues 9–14 (GAGAVG) and Asp-33. 2 residues coordinate substrate: Arg-82 and Arg-88. NAD(+)-binding positions include Asn-95 and 118 to 120 (VTN). Residues Asn-120 and Arg-151 each coordinate substrate. Residue His-175 is the Proton acceptor of the active site.

It belongs to the LDH/MDH superfamily. MDH type 3 family.

The enzyme catalyses (S)-malate + NAD(+) = oxaloacetate + NADH + H(+). Functionally, catalyzes the reversible oxidation of malate to oxaloacetate. This Thermomicrobium roseum (strain ATCC 27502 / DSM 5159 / P-2) protein is Malate dehydrogenase.